We begin with the raw amino-acid sequence, 92 residues long: Probable Fe(2+)-trafficking protein (92 aa).

Belongs to the Fe(2+)-trafficking protein family.

In terms of biological role, could be a mediator in iron transactions between iron acquisition and iron-requiring processes, such as synthesis and/or repair of Fe-S clusters in biosynthetic enzymes. This chain is Probable Fe(2+)-trafficking protein, found in Shewanella pealeana (strain ATCC 700345 / ANG-SQ1).